Here is a 675-residue protein sequence, read N- to C-terminus: DNA ligase (675 aa).

NAD(+) contacts are provided by residues 33–37, 82–83, and Glu114; these read DAEYD and SL. The active-site N6-AMP-lysine intermediate is the Lys116. Arg137, Glu174, Lys291, and Lys315 together coordinate NAD(+). Zn(2+)-binding residues include Cys409, Cys412, Cys427, and Cys433. The BRCT domain maps to 595–675; the sequence is AGDNPFAGKT…EMIRLLDQSK (81 aa).

It belongs to the NAD-dependent DNA ligase family. LigA subfamily. Requires Mg(2+) as cofactor. It depends on Mn(2+) as a cofactor.

It catalyses the reaction NAD(+) + (deoxyribonucleotide)n-3'-hydroxyl + 5'-phospho-(deoxyribonucleotide)m = (deoxyribonucleotide)n+m + AMP + beta-nicotinamide D-nucleotide.. Functionally, DNA ligase that catalyzes the formation of phosphodiester linkages between 5'-phosphoryl and 3'-hydroxyl groups in double-stranded DNA using NAD as a coenzyme and as the energy source for the reaction. It is essential for DNA replication and repair of damaged DNA. The protein is DNA ligase of Proteus mirabilis (strain HI4320).